Consider the following 512-residue polypeptide: Gasdermin-E (512 aa).

Residues 1–56 (MFAKATRNFLKEVDAGGDLISVSHLNDSDKLQLLSLVTKKKRYWCWQRPKYQILSA) are membrane targeting domain. C45 is subject to S-(2-succinyl)cysteine. K120 participates in a covalent cross-link: Glycyl lysine isopeptide (Lys-Gly) (interchain with G-Cter in ubiquitin). C156, C168, and C180 each carry S-(2-succinyl)cysteine. K189 is covalently cross-linked (Glycyl lysine isopeptide (Lys-Gly) (interchain with G-Cter in ubiquitin)). An S-(2-succinyl)cysteine mark is found at C235, C411, and C420.

It belongs to the gasdermin family. As to quaternary structure, homooligomer; homooligomeric ring-shaped pore complex containing 27-28 subunits when inserted in the membrane. In terms of processing, cleavage at Asp-270 by CASP3 (mature and uncleaved precursor forms) or granzyme B (GZMB) relieves autoinhibition and is sufficient to initiate pyroptosis. Post-translationally, succination by the Krebs cycle intermediate fumarate, which leads to S-(2-succinyl)cysteine residues, inhibits processing by caspases, and ability to initiate pyroptosis. Succination modification is catalyzed by a non-enzymatic reaction caused by an accumulation of fumarate. Ubiquitinated on Lys-120 and Lys-189 via 'Lys-48'-linked polyubiquitin chains, leading to proteasomal degradation. Deubiquitinated by USP48, leading to increased stability. In terms of processing, palmitoylated. Expressed in spleen, kidney, large and small intestine, testicle, stomach and by CD4(+)CD(8+) T cells in thymus. Expressed by macrophages.

The protein resides in the cell membrane. It localises to the cytoplasm. It is found in the cytosol. Its activity is regulated as follows. The full-length protein before cleavage is inactive: intramolecular interactions between N- and C-terminal domains mediate autoinhibition in the absence of activation signal. The intrinsic pyroptosis-inducing activity is carried by the released N-terminal moiety (Gasdermin-E, N-terminal) following cleavage by CASP3 or granzyme B (GZMB). Activated by NLRP1 in the absence of GSDMD expression: NLRP1 cleaves and activates CASP8, promoting downstream activation of CASP3 and subsequent activation of GSDME. Its function is as follows. Precursor of a pore-forming protein that converts non-inflammatory apoptosis to pyroptosis. This form constitutes the precursor of the pore-forming protein: upon cleavage, the released N-terminal moiety (Gasdermin-E, N-terminal) binds to membranes and forms pores, triggering pyroptosis. Functionally, pore-forming protein produced by cleavage by CASP3 or granzyme B (GZMB), which converts non-inflammatory apoptosis to pyroptosis or promotes granzyme-mediated pyroptosis, respectively. After cleavage, moves to the plasma membrane, homooligomerizes within the membrane and forms pores of 10-15 nanometers (nm) of inner diameter, allowing the release of mature interleukins (IL1B and IL16) and triggering pyroptosis. Binds to inner leaflet lipids, bisphosphorylated phosphatidylinositols, such as phosphatidylinositol (4,5)-bisphosphate. Cleavage by CASP3 switches CASP3-mediated apoptosis induced by TNF or danger signals, such as chemotherapy drugs, to pyroptosis. Mediates secondary necrosis downstream of the mitochondrial apoptotic pathway and CASP3 activation as well as in response to viral agents. Exhibits bactericidal activity. Cleavage by GZMB promotes tumor suppressor activity by triggering robust anti-tumor immunity. Suppresses tumors by mediating granzyme-mediated pyroptosis in target cells of natural killer (NK) cells: cleavage by granzyme B (GZMB), delivered to target cells from NK-cells, triggers pyroptosis of tumor cells and tumor suppression. May play a role in the p53/TP53-regulated cellular response to DNA damage. This is Gasdermin-E from Mus musculus (Mouse).